The primary structure comprises 85 residues: U4-theraphotoxin-Hhn1ad (85 aa).

Residues 1–22 form the signal peptide; the sequence is MKVTLIAILTCAAVLVLHTTAA. Residues 23 to 48 constitute a propeptide that is removed on maturation; the sequence is EELKTESQLMEVGMPDTELATVDEER. 3 disulfides stabilise this stretch: cysteine 52–cysteine 66, cysteine 56–cysteine 77, and cysteine 71–cysteine 82.

It belongs to the neurotoxin 12 (Hwtx-2) family. 02 (Hwtx-2) subfamily. As to expression, expressed by the venom gland.

The protein resides in the secreted. Functionally, postsynaptic neurotoxin. The polypeptide is U4-theraphotoxin-Hhn1ad (Cyriopagopus hainanus (Chinese bird spider)).